Reading from the N-terminus, the 176-residue chain is Vitamin K epoxide reductase complex subunit 1-like protein 1 (176 aa).

Over 1–13 the chain is Cytoplasmic; it reads MAAPVLLRVSVPR. A helical membrane pass occupies residues 14–36; it reads WERVARYAVCAAGILLSIYAYHV. The Lumenal portion of the chain corresponds to 37–87; the sequence is EREKERDPEHRALCDLGPWVKCSAALASRWGRGFGLLGSIFGKDGVLNQPN. Cysteines 50 and 58 form a disulfide. (S)-warfarin is bound at residue asparagine 87. A helical transmembrane segment spans residues 88-102; it reads SVFGLIFYILQLLLG. The Cytoplasmic portion of the chain corresponds to 103 to 107; it reads MTASA. The helical transmembrane segment at 108–135 threads the bilayer; it reads VAALVLMTSSIVSVVGSLYLAYILYFVL. Residues 136–138 are Lumenal-facing; the sequence is KEF. Residues cysteine 139 and cysteine 142 are joined by a disulfide bond. Residues 139–160 form a helical membrane-spanning segment; it reads CIICVTTYVLNFLLLIINYKRL. Phylloquinone-binding residues include cysteine 142 and tyrosine 146. A (S)-warfarin-binding site is contributed by tyrosine 146. Topologically, residues 161–176 are cytoplasmic; the sequence is VYLNEAWKRQLQPKED.

The protein belongs to the VKOR family. In terms of tissue distribution, detected in testis and lung.

Its subcellular location is the endoplasmic reticulum membrane. The catalysed reaction is phylloquinone + [protein]-disulfide + H2O = 2,3-epoxyphylloquinone + [protein]-dithiol. It catalyses the reaction phylloquinol + [protein]-disulfide = phylloquinone + [protein]-dithiol. With respect to regulation, inhibited by warfarin (coumadin). Warfarin locks VKORC1 in both redox states into the closed conformation. Functionally, involved in vitamin K metabolism. Can reduce inactive vitamin K 2,3-epoxide to active vitamin K, and may contribute to vitamin K-mediated protection against oxidative stress. Plays a role in vitamin K-dependent gamma-carboxylation of Glu residues in target proteins. The protein is Vitamin K epoxide reductase complex subunit 1-like protein 1 (Vkorc1l1) of Mus musculus (Mouse).